The sequence spans 160 residues: Putative tRNA (cytidine(34)-2'-O)-methyltransferase (160 aa).

Residues isoleucine 82, glycine 107, leucine 128, and serine 136 each contribute to the S-adenosyl-L-methionine site.

Belongs to the class IV-like SAM-binding methyltransferase superfamily. RNA methyltransferase TrmH family. TrmL subfamily.

It is found in the cytoplasm. The catalysed reaction is cytidine(34) in tRNA + S-adenosyl-L-methionine = 2'-O-methylcytidine(34) in tRNA + S-adenosyl-L-homocysteine + H(+). The enzyme catalyses 5-carboxymethylaminomethyluridine(34) in tRNA(Leu) + S-adenosyl-L-methionine = 5-carboxymethylaminomethyl-2'-O-methyluridine(34) in tRNA(Leu) + S-adenosyl-L-homocysteine + H(+). Its function is as follows. Could methylate the ribose at the nucleotide 34 wobble position in tRNA. The protein is Putative tRNA (cytidine(34)-2'-O)-methyltransferase (cspR) of Bacillus subtilis (strain 168).